A 229-amino-acid polypeptide reads, in one-letter code: 2,3-bisphosphoglycerate-dependent phosphoglycerate mutase (229 aa).

Residues 7–14 (RHGQSEWN), 20–21 (TG), Arg59, 86–89 (ERHY), Lys97, 113–114 (RR), and 182–183 (GN) each bind substrate. His8 (tele-phosphohistidine intermediate) is an active-site residue. Catalysis depends on Glu86, which acts as the Proton donor/acceptor.

Belongs to the phosphoglycerate mutase family. BPG-dependent PGAM subfamily.

The catalysed reaction is (2R)-2-phosphoglycerate = (2R)-3-phosphoglycerate. Its pathway is carbohydrate degradation; glycolysis; pyruvate from D-glyceraldehyde 3-phosphate: step 3/5. Functionally, catalyzes the interconversion of 2-phosphoglycerate and 3-phosphoglycerate. This chain is 2,3-bisphosphoglycerate-dependent phosphoglycerate mutase, found in Listeria welshimeri serovar 6b (strain ATCC 35897 / DSM 20650 / CCUG 15529 / CIP 8149 / NCTC 11857 / SLCC 5334 / V8).